The following is a 194-amino-acid chain: UPF0301 protein BQ03640 (194 aa).

It belongs to the UPF0301 (AlgH) family.

In Bartonella quintana (strain Toulouse) (Rochalimaea quintana), this protein is UPF0301 protein BQ03640.